Consider the following 383-residue polypeptide: Dual-specificity RNA methyltransferase RlmN (383 aa).

Glu93 serves as the catalytic Proton acceptor. The 241-residue stretch at 99 to 339 folds into the Radical SAM core domain; that stretch reads EETRGTLCVS…TTIRKTRGDD (241 aa). A disulfide bridge links Cys106 with Cys344. [4Fe-4S] cluster-binding residues include Cys113, Cys117, and Cys120. S-adenosyl-L-methionine contacts are provided by residues 170-171, Ser202, 224-226, and Asn301; these read GE and SLH. The active-site S-methylcysteine intermediate is the Cys344.

This sequence belongs to the radical SAM superfamily. RlmN family. [4Fe-4S] cluster is required as a cofactor.

The protein localises to the cytoplasm. The enzyme catalyses adenosine(2503) in 23S rRNA + 2 reduced [2Fe-2S]-[ferredoxin] + 2 S-adenosyl-L-methionine = 2-methyladenosine(2503) in 23S rRNA + 5'-deoxyadenosine + L-methionine + 2 oxidized [2Fe-2S]-[ferredoxin] + S-adenosyl-L-homocysteine. The catalysed reaction is adenosine(37) in tRNA + 2 reduced [2Fe-2S]-[ferredoxin] + 2 S-adenosyl-L-methionine = 2-methyladenosine(37) in tRNA + 5'-deoxyadenosine + L-methionine + 2 oxidized [2Fe-2S]-[ferredoxin] + S-adenosyl-L-homocysteine. In terms of biological role, specifically methylates position 2 of adenine 2503 in 23S rRNA and position 2 of adenine 37 in tRNAs. m2A2503 modification seems to play a crucial role in the proofreading step occurring at the peptidyl transferase center and thus would serve to optimize ribosomal fidelity. This Ralstonia pickettii (strain 12J) protein is Dual-specificity RNA methyltransferase RlmN.